The chain runs to 153 residues: E3 ubiquitin-protein ligase AIRP1 (153 aa).

The segment at 104–145 adopts an RING-type; atypical zinc-finger fold; that stretch reads CPICLEEYEIDNPKLLTKCGHDFHLACILAWMERSEACPVCD.

The protein resides in the cytoplasm. Its subcellular location is the cytosol. It catalyses the reaction S-ubiquitinyl-[E2 ubiquitin-conjugating enzyme]-L-cysteine + [acceptor protein]-L-lysine = [E2 ubiquitin-conjugating enzyme]-L-cysteine + N(6)-ubiquitinyl-[acceptor protein]-L-lysine.. In terms of biological role, possesses E3 ubiquitin-protein ligase activity in vitro when associated with the E2 enzyme UBC8 in vitro. Plays combinatory roles with AIRP2 in the positive regulation of the abscisic acid-mediated drought stress response. This Arabidopsis thaliana (Mouse-ear cress) protein is E3 ubiquitin-protein ligase AIRP1.